A 261-amino-acid chain; its full sequence is tRNA pseudouridine synthase A (261 aa).

Asp51 serves as the catalytic Nucleophile. Tyr109 lines the substrate pocket.

This sequence belongs to the tRNA pseudouridine synthase TruA family. Homodimer.

The catalysed reaction is uridine(38/39/40) in tRNA = pseudouridine(38/39/40) in tRNA. Formation of pseudouridine at positions 38, 39 and 40 in the anticodon stem and loop of transfer RNAs. This chain is tRNA pseudouridine synthase A, found in Idiomarina loihiensis (strain ATCC BAA-735 / DSM 15497 / L2-TR).